The primary structure comprises 388 residues: Succinate--CoA ligase [ADP-forming] subunit beta (388 aa).

Positions 9 to 244 constitute an ATP-grasp domain; it reads KEILRKFGVA…LDEEDPAEIE (236 aa). Residues Lys46, 53–55, Glu99, Ala102, and Glu107 each bind ATP; that span reads GRG. Residues Asn199 and Asp213 each coordinate Mg(2+). Substrate contacts are provided by residues Asn264 and 321 to 323; that span reads GIM.

This sequence belongs to the succinate/malate CoA ligase beta subunit family. Heterotetramer of two alpha and two beta subunits. Requires Mg(2+) as cofactor.

It carries out the reaction succinate + ATP + CoA = succinyl-CoA + ADP + phosphate. It catalyses the reaction GTP + succinate + CoA = succinyl-CoA + GDP + phosphate. The protein operates within carbohydrate metabolism; tricarboxylic acid cycle; succinate from succinyl-CoA (ligase route): step 1/1. Its function is as follows. Succinyl-CoA synthetase functions in the citric acid cycle (TCA), coupling the hydrolysis of succinyl-CoA to the synthesis of either ATP or GTP and thus represents the only step of substrate-level phosphorylation in the TCA. The beta subunit provides nucleotide specificity of the enzyme and binds the substrate succinate, while the binding sites for coenzyme A and phosphate are found in the alpha subunit. This chain is Succinate--CoA ligase [ADP-forming] subunit beta, found in Burkholderia cenocepacia (strain HI2424).